A 329-amino-acid chain; its full sequence is GMP reductase (329 aa).

Cysteine 178 (thioimidate intermediate) is an active-site residue. Residue 207-230 (VIADGGIRTHGDIAKSIRMGATMV) coordinates NADP(+).

Belongs to the IMPDH/GMPR family. GuaC type 2 subfamily.

It carries out the reaction IMP + NH4(+) + NADP(+) = GMP + NADPH + 2 H(+). Its function is as follows. Catalyzes the irreversible NADPH-dependent deamination of GMP to IMP. It functions in the conversion of nucleobase, nucleoside and nucleotide derivatives of G to A nucleotides, and in maintaining the intracellular balance of A and G nucleotides. The polypeptide is GMP reductase (Lactococcus lactis subsp. lactis (strain IL1403) (Streptococcus lactis)).